We begin with the raw amino-acid sequence, 286 residues long: Light-independent protochlorophyllide reductase iron-sulfur ATP-binding protein (286 aa).

ATP contacts are provided by residues 10-15 (GIGKST) and K39. Position 14 (S14) interacts with Mg(2+). Residues C95 and C129 each coordinate [4Fe-4S] cluster. Residue 180–181 (NR) coordinates ATP.

The protein belongs to the NifH/BchL/ChlL family. In terms of assembly, homodimer. Protochlorophyllide reductase is composed of three subunits; ChlL, ChlN and ChlB. [4Fe-4S] cluster serves as cofactor.

The enzyme catalyses chlorophyllide a + oxidized 2[4Fe-4S]-[ferredoxin] + 2 ADP + 2 phosphate = protochlorophyllide a + reduced 2[4Fe-4S]-[ferredoxin] + 2 ATP + 2 H2O. Its pathway is porphyrin-containing compound metabolism; chlorophyll biosynthesis (light-independent). Component of the dark-operative protochlorophyllide reductase (DPOR) that uses Mg-ATP and reduced ferredoxin to reduce ring D of protochlorophyllide (Pchlide) to form chlorophyllide a (Chlide). This reaction is light-independent. The L component serves as a unique electron donor to the NB-component of the complex, and binds Mg-ATP. This is Light-independent protochlorophyllide reductase iron-sulfur ATP-binding protein from Leptolyngbya boryana (Plectonema boryanum).